A 292-amino-acid chain; its full sequence is 11-beta-hydroxysteroid dehydrogenase 1 (292 aa).

At 2 to 7 the chain is on the cytoplasmic side; the sequence is HFMKKY. A helical; Signal-anchor for type II membrane protein transmembrane segment spans residues 8–24; it reads LLPILVLFLAYYYYSTK. The Lumenal segment spans residues 25 to 292; sequence EEFRPEMLQG…SFTFDKLISS (268 aa). NADP(+)-binding positions include 41 to 67, 92 to 93, and 119 to 121; these read GASKGIGREMAYHLSEMGAHVVLTARS, TM, and NHI. An N-linked (GlcNAc...) asparagine glycan is attached at Asn-162. Ser-170 provides a ligand contact to substrate. Tyr-183 (proton acceptor) is an active-site residue. An NADP(+)-binding site is contributed by 183–187; that stretch reads YSASK. Residue Asn-207 is glycosylated (N-linked (GlcNAc...) asparagine). 218 to 222 provides a ligand contact to NADP(+); it reads INTET.

The protein belongs to the short-chain dehydrogenases/reductases (SDR) family. Homodimer. As to expression, detected in adrenal gland, liver, kidney, testis, and at lower levels in brain and lung (at protein level).

It localises to the endoplasmic reticulum membrane. It carries out the reaction an 11beta-hydroxysteroid + NADP(+) = an 11-oxosteroid + NADPH + H(+). The enzyme catalyses corticosterone + NADP(+) = 11-dehydrocorticosterone + NADPH + H(+). The catalysed reaction is a 7beta-hydroxysteroid + NADP(+) = a 7-oxosteroid + NADPH + H(+). It catalyses the reaction 7-oxocholesterol + NADPH + H(+) = 7beta-hydroxycholesterol + NADP(+). It carries out the reaction 7-oxocholesterol + NADPH + H(+) = 7alpha-hydroxycholesterol + NADP(+). The enzyme catalyses chenodeoxycholate + NADP(+) = 7-oxolithocholate + NADPH + H(+). The catalysed reaction is 7-oxolithocholate + NADPH + H(+) = ursodeoxycholate + NADP(+). It catalyses the reaction glycochenodeoxycholate + NADP(+) = 7-oxoglycolithocholate + NADPH + H(+). It carries out the reaction taurochenodeoxycholate + NADP(+) = 7-oxotaurolithocholate + NADPH + H(+). The enzyme catalyses tauroursodeoxycholate + NADP(+) = 7-oxotaurolithocholate + NADPH + H(+). The catalysed reaction is glycoursodeoxycholate + NADP(+) = 7-oxoglycolithocholate + NADPH + H(+). It catalyses the reaction 7-oxopregnenolone + NADPH + H(+) = 7beta-hydroxypregnenolone + NADP(+). It carries out the reaction 3beta,7alpha-dihydroxyandrost-5-en-17-one + NADP(+) = 3beta-hydroxy-5-androstene-7,17-dione + NADPH + H(+). The enzyme catalyses 3beta-hydroxy-5-androstene-7,17-dione + NADPH + H(+) = 3beta,7beta-dihydroxyandrost-5-en-17-one + NADP(+). The catalysed reaction is 3beta-hydroxy-5alpha-androstane-7,17-dione + NADPH + H(+) = 3beta,7beta-dihydroxy-5alpha-androstan-17-one + NADP(+). Its pathway is steroid metabolism. Its function is as follows. Controls the reversible conversion of biologically active glucocorticoids such as 11-dehydrocorticosterone to corticosterone in the presence of NADP(H). Participates in the corticosteroid receptor-mediated anti-inflammatory response, as well as metabolic and homeostatic processes. Bidirectional in vitro, predominantly functions as a reductase in vivo, thereby increasing the concentration of active glucocorticoids. It has broad substrate specificity, besides glucocorticoids, it accepts other steroid and sterol substrates. Interconverts 7-oxo- and 7-hydroxy-neurosteroids such as 7-oxopregnenolone and 7beta-hydroxypregnenolone, 7-oxodehydroepiandrosterone (3beta-hydroxy-5-androstene-7,17-dione) and 7beta-hydroxydehydroepiandrosterone (3beta,7beta-dihydroxyandrost-5-en-17-one), among others. Catalyzes reversibly the conversion of the major dietary oxysterol, 7-ketocholesterol (7-oxocholesterol), into the more polar 7-beta-hydroxycholesterol and 7-alpha-hhydroxycholesterol metabolites. 7-oxocholesterol is one of the most important oxysterols, it participates in several events such as induction of apoptosis, accumulation in atherosclerotic lesions, lipid peroxidation, and induction of foam cell formation. Mediates the 7-oxo reduction of 7-oxolithocholate mainly to chenodeoxycholate, and to a lesser extent to ursodeoxycholate, both in its free form and when conjugated to glycine or taurine, providing a link between glucocorticoid activation and bile acid metabolism. Catalyzes the synthesis of 7-beta-25-dihydroxycholesterol from 7-oxo-25-hydroxycholesterol in vitro, which acts as a ligand for the G-protein-coupled receptor (GPCR) Epstein-Barr virus-induced gene 2 (EBI2) and may thereby regulate immune cell migration. The protein is 11-beta-hydroxysteroid dehydrogenase 1 (HSD11B1) of Mesocricetus auratus (Golden hamster).